Here is a 409-residue protein sequence, read N- to C-terminus: MKLINICIFIFAIICIESTFGFYTDNSNVINLTKKNFQQQVLNSQQNWMVEFYAPWCGHCKSLKPEYEKVSNNLKGLVKIGAINCDEEKELCGQYQIQGFPTLKFFSTNPKTGKKGQPEDYQGARSASEIAKFSLAKLPSNHIQKVSQDNINKFLTGTSDAKALLFTDKPKTTDLYKALSVDFFKTLTLGEARNLNKETLEKFNIDKFPTLLVFTNDDGETFTKFDGKLTHSTIYKFLEPFSKKSNNDNNNNNNNNNNEESTKTTTTEKDPASEKFIEIKDEKSFEKSCSTGLCIVALFDQSSIDDKELNEKYLELLNTVSQNFIGRMKFVWVDVSVHDKIVPQFDLSGTPNIFVINNSKKRYTPFMGSFSDESLNSFFKSVLSGLKKAIPFTDSPKFNSQQKKQKDEL.

Residues 1–21 form the signal peptide; that stretch reads MKLINICIFIFAIICIESTFG. A Thioredoxin domain is found at 28-140; the sequence is NVINLTKKNF…AKFSLAKLPS (113 aa). Cysteine 57 and cysteine 60 form a disulfide bridge. The interval 245-273 is disordered; it reads SNNDNNNNNNNNNNEESTKTTTTEKDPAS. A compositionally biased stretch (low complexity) spans 247–259; sequence NDNNNNNNNNNNE. Basic and acidic residues predominate over residues 260–273; it reads ESTKTTTTEKDPAS. The Prevents secretion from ER motif lies at 406-409; sequence KDEL.

Belongs to the protein disulfide isomerase family.

The protein resides in the endoplasmic reticulum lumen. It catalyses the reaction Catalyzes the rearrangement of -S-S- bonds in proteins.. The sequence is that of Putative protein disulfide-isomerase DDB_G0275025 from Dictyostelium discoideum (Social amoeba).